The chain runs to 159 residues: Protein HydD (159 aa).

This sequence belongs to the peptidase A31 family.

The polypeptide is Protein HydD (hydD) (Wolinella succinogenes (strain ATCC 29543 / DSM 1740 / CCUG 13145 / JCM 31913 / LMG 7466 / NCTC 11488 / FDC 602W) (Vibrio succinogenes)).